The primary structure comprises 328 residues: Phosphate acyltransferase (328 aa).

It belongs to the PlsX family. As to quaternary structure, homodimer. Probably interacts with PlsY.

It localises to the cytoplasm. It catalyses the reaction a fatty acyl-[ACP] + phosphate = an acyl phosphate + holo-[ACP]. Its pathway is lipid metabolism; phospholipid metabolism. In terms of biological role, catalyzes the reversible formation of acyl-phosphate (acyl-PO(4)) from acyl-[acyl-carrier-protein] (acyl-ACP). This enzyme utilizes acyl-ACP as fatty acyl donor, but not acyl-CoA. This is Phosphate acyltransferase from Mycoplasmoides gallisepticum (strain R(low / passage 15 / clone 2)) (Mycoplasma gallisepticum).